The following is a 226-amino-acid chain: B-cell antigen receptor complex-associated protein alpha chain (226 aa).

Positions 1–32 (MPGGPGVLQALPATIFLLFLLSAVYLGPGCQA) are cleaved as a signal peptide. Positions 33–116 (LWMHKVPASL…RVQEGNESYQ (84 aa)) constitute an Ig-like C2-type domain. The Extracellular segment spans residues 33 to 143 (LWMHKVPASL…LDMGEGTKNR (111 aa)). C54 and C106 form a disulfide bridge. Residues N57, N63, N73, N88, N97, and N112 are each glycosylated (N-linked (GlcNAc...) asparagine). Residues 144–165 (IITAEGIILLFCAVVPGTLLLF) traverse the membrane as a helical segment. Topologically, residues 166–226 (RKRWQNEKLG…NIGDVQLEKP (61 aa)) are cytoplasmic. An ITAM domain is found at 177–205 (DAGDEYEDENLYEGLNLDDCSMYEDISRG). Residues Y188 and Y199 each carry the phosphotyrosine; by SRC-type Tyr-kinases modification. At R204 the chain carries Asymmetric dimethylarginine; by PRMT1. Phosphotyrosine; by Tyr-kinases is present on Y210.

Heterodimer of alpha and beta chains; disulfide-linked. Part of the B-cell antigen receptor complex where the alpha/beta chain heterodimer is non-covalently associated with an antigen-specific membrane-bound surface immunoglobulin of two heavy chains and two light chains. Interacts through its phosphorylated ITAM domain with the SH2 domains of SYK which stimulates SYK autophosphorylation and activation. Also interacts, when phosphorylated on Tyr-210, with the SH2 domain of BLNK/SLP65, bringing BLNK into proximity with SYK and allowing SYK to phosphorylate BLNK which is necessary for trafficking of the BCR to late endosomes. Interacts with Src-family tyrosine kinases including FYN and LYN, increasing their activity. Post-translationally, phosphorylated on tyrosine, serine and threonine residues upon B-cell activation. Phosphorylation of tyrosine residues by Src-family kinases is an early and essential feature of the BCR signaling cascade. The phosphorylated tyrosines serve as docking sites for SH2-domain containing kinases, leading to their activation which in turn leads to phosphorylation of downstream targets. Phosphorylated by LYN. Phosphorylation of serine and threonine residues may prevent subsequent tyrosine phosphorylation. Arginine methylation in the ITAM domain may interfere with the binding of SYK. It promotes signals leading to B-cell differentiation. In terms of tissue distribution, B-cells.

Its subcellular location is the cell membrane. Functionally, required in cooperation with CD79B for initiation of the signal transduction cascade activated by binding of antigen to the B-cell antigen receptor complex (BCR) which leads to internalization of the complex, trafficking to late endosomes and antigen presentation. Also required for BCR surface expression and for efficient differentiation of pro- and pre-B-cells. Stimulates SYK autophosphorylation and activation. Binds to BLNK, bringing BLNK into proximity with SYK and allowing SYK to phosphorylate BLNK. Also interacts with and increases activity of some Src-family tyrosine kinases. Represses BCR signaling during development of immature B-cells. This Homo sapiens (Human) protein is B-cell antigen receptor complex-associated protein alpha chain (CD79A).